A 190-amino-acid chain; its full sequence is MGGTFDPVHNGHLVAASEVAALFDLDEVVFVPSGQPWQKIHRKVSAAEDRYLMTFLATAGNPQFTVSRIEIDRGGATYTIDTLRDLRAARPDDELFFITGADALAQIFTWRDHRELFELAHFVGVNRPGYHLALDAGLPTGAVSLLEVPALAISSSDIRERVGRRAPIWYLTPDGVVRYIAKRRLYQGAS.

It belongs to the NadD family.

The catalysed reaction is nicotinate beta-D-ribonucleotide + ATP + H(+) = deamido-NAD(+) + diphosphate. It participates in cofactor biosynthesis; NAD(+) biosynthesis; deamido-NAD(+) from nicotinate D-ribonucleotide: step 1/1. In terms of biological role, catalyzes the reversible adenylation of nicotinate mononucleotide (NaMN) to nicotinic acid adenine dinucleotide (NaAD). The sequence is that of Probable nicotinate-nucleotide adenylyltransferase from Frankia casuarinae (strain DSM 45818 / CECT 9043 / HFP020203 / CcI3).